The following is a 391-amino-acid chain: S-adenosylmethionine synthase (391 aa).

An ATP-binding site is contributed by His-14. Asp-16 is a binding site for Mg(2+). Residue Glu-42 coordinates K(+). The L-methionine site is built by Glu-55 and Gln-98. The interval 98–108 is flexible loop; sequence QSVDIAIGVDE. Residues 172-174, 238-239, Asp-247, 253-254, Ala-270, and Lys-274 each bind ATP; these read DGK, RF, and RK. Asp-247 is an L-methionine binding site. L-methionine is bound at residue Lys-278.

It belongs to the AdoMet synthase family. Homotetramer; dimer of dimers. Mg(2+) serves as cofactor. Requires K(+) as cofactor.

It localises to the cytoplasm. The catalysed reaction is L-methionine + ATP + H2O = S-adenosyl-L-methionine + phosphate + diphosphate. It functions in the pathway amino-acid biosynthesis; S-adenosyl-L-methionine biosynthesis; S-adenosyl-L-methionine from L-methionine: step 1/1. Its function is as follows. Catalyzes the formation of S-adenosylmethionine (AdoMet) from methionine and ATP. The overall synthetic reaction is composed of two sequential steps, AdoMet formation and the subsequent tripolyphosphate hydrolysis which occurs prior to release of AdoMet from the enzyme. In Clostridium botulinum (strain Okra / Type B1), this protein is S-adenosylmethionine synthase.